The primary structure comprises 180 residues: Transcriptional repressor NrdR (180 aa).

The segment at 3–34 (CPRCSKQEIRVLESRSAEGGQSVRRRRECMSC) is a zinc-finger region. An ATP-cone domain is found at 49–139 (IMVIKRDGSR…VYRQFQGIKD (91 aa)). A disordered region spans residues 155-180 (LERLLQDSSASDSESSGSPDLVGEYS). The segment covering 160–174 (QDSSASDSESSGSPD) has biased composition (low complexity).

It belongs to the NrdR family. It depends on Zn(2+) as a cofactor.

Its function is as follows. Negatively regulates transcription of bacterial ribonucleotide reductase nrd genes and operons by binding to NrdR-boxes. The sequence is that of Transcriptional repressor NrdR from Synechococcus sp. (strain JA-2-3B'a(2-13)) (Cyanobacteria bacterium Yellowstone B-Prime).